Here is a 390-residue protein sequence, read N- to C-terminus: 8-amino-7-oxononanoate synthase (390 aa).

Substrate is bound at residue R22. Position 109–110 (109–110 (GY)) interacts with pyridoxal 5'-phosphate. H134 contributes to the substrate binding site. Pyridoxal 5'-phosphate-binding residues include S180, H208, and T236. K239 is subject to N6-(pyridoxal phosphate)lysine. Position 353 (T353) interacts with substrate.

The protein belongs to the class-II pyridoxal-phosphate-dependent aminotransferase family. BioF subfamily. As to quaternary structure, homodimer. Requires pyridoxal 5'-phosphate as cofactor.

It carries out the reaction 6-carboxyhexanoyl-[ACP] + L-alanine + H(+) = (8S)-8-amino-7-oxononanoate + holo-[ACP] + CO2. Its pathway is cofactor biosynthesis; biotin biosynthesis. Catalyzes the decarboxylative condensation of pimeloyl-[acyl-carrier protein] and L-alanine to produce 8-amino-7-oxononanoate (AON), [acyl-carrier protein], and carbon dioxide. The sequence is that of 8-amino-7-oxononanoate synthase from Azoarcus sp. (strain BH72).